Here is a 205-residue protein sequence, read N- to C-terminus: TATA-box-binding protein (205 aa).

2 tandem repeats follow at residues 27 to 103 (LQNI…ARII) and 117 to 194 (IQNI…YPVL).

This sequence belongs to the TBP family. As to quaternary structure, belongs to the TFIID complex together with the TBP-associated factors (TAFs). Binds DNA as monomer.

The protein localises to the nucleus. Its function is as follows. General transcription factor that functions at the core of the DNA-binding multiprotein factor TFIID. Binding of TFIID to the TATA box is the initial transcriptional step of the pre-initiation complex (PIC), playing a role in the activation of eukaryotic genes transcribed by RNA polymerase II. This Dictyostelium discoideum (Social amoeba) protein is TATA-box-binding protein (tbpA).